A 106-amino-acid chain; its full sequence is Large ribosomal subunit protein uL24 (106 aa).

Belongs to the universal ribosomal protein uL24 family. In terms of assembly, part of the 50S ribosomal subunit.

Its function is as follows. One of two assembly initiator proteins, it binds directly to the 5'-end of the 23S rRNA, where it nucleates assembly of the 50S subunit. In terms of biological role, one of the proteins that surrounds the polypeptide exit tunnel on the outside of the subunit. The protein is Large ribosomal subunit protein uL24 of Desulforamulus reducens (strain ATCC BAA-1160 / DSM 100696 / MI-1) (Desulfotomaculum reducens).